The sequence spans 690 residues: Elongation factor G (690 aa).

In terms of domain architecture, tr-type G spans 8–283 (EDYRNFGIMA…AVVDYLPSPI (276 aa)). GTP-binding positions include 17–24 (AHIDAGKT), 81–85 (DTPGH), and 135–138 (NKMD).

This sequence belongs to the TRAFAC class translation factor GTPase superfamily. Classic translation factor GTPase family. EF-G/EF-2 subfamily.

Its subcellular location is the cytoplasm. In terms of biological role, catalyzes the GTP-dependent ribosomal translocation step during translation elongation. During this step, the ribosome changes from the pre-translocational (PRE) to the post-translocational (POST) state as the newly formed A-site-bound peptidyl-tRNA and P-site-bound deacylated tRNA move to the P and E sites, respectively. Catalyzes the coordinated movement of the two tRNA molecules, the mRNA and conformational changes in the ribosome. This is Elongation factor G from Bradyrhizobium diazoefficiens (strain JCM 10833 / BCRC 13528 / IAM 13628 / NBRC 14792 / USDA 110).